Here is a 242-residue protein sequence, read N- to C-terminus: Flavin prenyltransferase PAD1, mitochondrial (242 aa).

A mitochondrion-targeting transit peptide spans 1-58 (MLLFPRRTNIAFFKTTGIFANFPLLGRTITTSPSFLTHKLSKEVTRASTSPPRPKRIV). FMN contacts are provided by residues 63–65 (GAT), S89, 140–143 (SMKS), and R175. Residues Y205 and R221 each coordinate dimethylallyl phosphate.

The protein belongs to the UbiX/PAD1 family. In terms of assembly, oligomer.

The protein localises to the mitochondrion. The enzyme catalyses dimethylallyl phosphate + FMNH2 = prenylated FMNH2 + phosphate. Functionally, flavin prenyltransferase that catalyzes the synthesis of the prenylated FMN cofactor (prenyl-FMN) for the ferulic acid decarboxylase FDC1/ubiD. The prenyltransferase is metal-independent and links a dimethylallyl moiety from dimethylallyl monophosphate (DMAP) to the flavin N5 and C6 atoms of FMN. Involved in the decarboxylation of phenylacrylic acids like ferulic acid, p-coumaric acid or cinnamic acid, producing the corresponding vinyl derivatives which play the role of aroma metabolites. Also involved in the degradation of the food preservative sorbic acid (2,4-hexadienoic acid) to a volatile hydrocarbon, 1,3-pentadiene. Not essential for ubiquinone synthesis. Can rescue Q biosynthesis in E.coli strains lacking UbiX. Has mRNA binding activity. The protein is Flavin prenyltransferase PAD1, mitochondrial of Saccharomyces cerevisiae (strain ATCC 204508 / S288c) (Baker's yeast).